Consider the following 1004-residue polypeptide: Unconventional myosin-Id (1004 aa).

One can recognise a Myosin motor domain in the interval 9-695 (FGKADFVLLD…TIFSLEEQRA (687 aa)). ATP is bound at residue 102–109 (GESGAGKT). Residues 572–594 (MISLVEKLASKEPYYVRCIKPND) form an actin-binding region. IQ domains lie at 699–719 (KRIV…MRYR) and 721–741 (MRAA…SYIR). Residues 812-1003 (GQRADLGLQR…RSGYILSVPG (192 aa)) form the TH1 domain.

It belongs to the TRAFAC class myosin-kinesin ATPase superfamily. Myosin family. In terms of assembly, interacts (via the two IQ motifs) with calmodulin. Interacts with F-actin.

Its subcellular location is the cytoplasm. The protein localises to the perikaryon. It is found in the cell projection. It localises to the dendrite. The protein resides in the early endosome. Its subcellular location is the cell cortex. Functionally, unconventional myosin that functions as actin-based motor protein with ATPase activity. Plays a role in the formation of Kupffer's vesicle, an organ that functions as a left-right organizer during embryogenesis. Plays a role in vesicular trafficking events that are required for normal lumen expansion of Kupffer's vesicle. Required for normal orientation of cilia in Kupffer's vesicle, and thus for normal, unidirectional circular flow and normal angular flow velocity, which then mediates asymmetric gene expression and left-right asymmetric development. Plays a role in endosomal protein trafficking, and especially in the transfer of cargo proteins from early to recycling endosomes. Required for normal planar cell polarity in ciliated cells, for normal rotational polarity of cilia, and for coordinated, unidirectional ciliary movement. In Danio rerio (Zebrafish), this protein is Unconventional myosin-Id (myo1d).